A 348-amino-acid chain; its full sequence is D-alanine--D-alanine ligase (348 aa).

The ATP-grasp domain occupies 132–334 (KRVLESIGIP…YPDLIEELVT (203 aa)). 162 to 217 (LARLTFPIFVKPANMGSSVGISKAQTKVELRKAIQLALTYDSRVLIEQGVIAREIE) serves as a coordination point for ATP. D288, E301, and N303 together coordinate Mg(2+).

It belongs to the D-alanine--D-alanine ligase family. It depends on Mg(2+) as a cofactor. Mn(2+) is required as a cofactor.

Its subcellular location is the cytoplasm. It carries out the reaction 2 D-alanine + ATP = D-alanyl-D-alanine + ADP + phosphate + H(+). The protein operates within cell wall biogenesis; peptidoglycan biosynthesis. Cell wall formation. The polypeptide is D-alanine--D-alanine ligase (Streptococcus pyogenes serotype M4 (strain MGAS10750)).